Consider the following 569-residue polypeptide: Aspartokinase 1, chloroplastic (569 aa).

The N-terminal 90 residues, 1 to 90, are a transit peptide targeting the chloroplast; that stretch reads MAATRVRCCH…VDEKGITCVM (90 aa). Residues Lys91, Gly94, and Ser123 each coordinate ATP. Glu207 is a substrate binding site. ACT domains are found at residues 405–483 and 484–560; these read IAST…AIIS and LIGN…GNGS. Positions 413 and 415 each coordinate L-lysine. Ser430 is a binding site for S-adenosyl-L-methionine. Residues Val431, Asp432, and Ser437 each contribute to the L-lysine site. 2 residues coordinate S-adenosyl-L-methionine: Ser452 and Arg453.

Belongs to the aspartokinase family. In terms of assembly, homodimer.

The protein localises to the plastid. It localises to the chloroplast. The enzyme catalyses L-aspartate + ATP = 4-phospho-L-aspartate + ADP. Its pathway is amino-acid biosynthesis; L-lysine biosynthesis via DAP pathway; (S)-tetrahydrodipicolinate from L-aspartate: step 1/4. It participates in amino-acid biosynthesis; L-methionine biosynthesis via de novo pathway; L-homoserine from L-aspartate: step 1/3. The protein operates within amino-acid biosynthesis; L-threonine biosynthesis; L-threonine from L-aspartate: step 1/5. Its activity is regulated as follows. Inhibited by S-adenosyl-L-methionine (SAM) and lysine in a synergistic manner. No inhibition by threonine, leucine or SAM alone, and no activation or inhibition by alanine, cysteine, isoleucine, serine, valine, methionine, glutamine, asparagine, glutamic acid or arginine. Involved in the first step of essential amino acids lysine, threonine, methionine and isoleucine synthesis via the aspartate-family pathway. The protein is Aspartokinase 1, chloroplastic (AK1) of Arabidopsis thaliana (Mouse-ear cress).